The primary structure comprises 644 residues: uncharacterized protein (644 aa).

Disordered stretches follow at residues 1–35 (MSSH…EYCS) and 48–106 (GNSH…SHHN). At serine 28 the chain carries Phosphoserine. Residues 58-70 (NGASSSNNNVAKS) show a composition bias toward low complexity. The segment covering 83–106 (YDSTSNSNEPISFNEPDSSNSHHN) has biased composition (polar residues). 12 consecutive transmembrane segments (helical) span residues 131 to 151 (ILPL…PLLF), 190 to 210 (AAFG…YGTM), 218 to 238 (LVLF…LYQS), 245 to 265 (YFVL…TVVA), 286 to 306 (LNFA…GFIV), 314 to 334 (YVFY…WLIL), 398 to 418 (VLLA…MGLL), 435 to 455 (LILS…FPLL), 522 to 542 (VWNA…LAVA), 546 to 566 (VALF…PCVQ), 583 to 603 (AAFA…YAFV), and 614 to 634 (NMIF…IFFM).

It is found in the membrane. This is an uncharacterized protein from Schizosaccharomyces pombe (strain 972 / ATCC 24843) (Fission yeast).